A 74-amino-acid chain; its full sequence is Large ribosomal subunit protein bL27c (74 aa).

This sequence belongs to the bacterial ribosomal protein bL27 family.

It is found in the plastid. The protein localises to the chloroplast. The chain is Large ribosomal subunit protein bL27c (rpl27) from Pleurochrysis haptonemofera (Unicellular marine alga).